A 353-amino-acid chain; its full sequence is MTAILERRESTSLWGRFCNWITSTENRLYIGWFGVLMIPTLLTATSVFIIAFIAAPPVDIDGIREPVSGSLLYGNNIISGAIIPTSAAIGLHFYPIWEAASVDEWLYNGGPYELIVLHFLLGVACYMGREWELSFRLGMRPWIAVAYSAPVAAATAVFLIYPIGQGSFSDGMPLGISGTFNFMIVFQAEHNILMHPFHMLGVAGVFGGSLFSAMHGSLVTSSLIRETTENESANEGYRFGQEEETYNIVAAHGYFGRLIFQYASFNNSRSLHFFLAAWPVVGIWFTALGISTMAFNLNGFNFNQSVVDSQGRVINTWADIINRANLGMEVMHERNAHNFPLDLASVEAPSTNG.

Residue Thr-2 is modified to N-acetylthreonine. Residue Thr-2 is modified to Phosphothreonine. A run of 3 helical transmembrane segments spans residues 29-46 (YIGW…TATS), 118-133 (HFLL…EWEL), and 142-156 (WIAV…AATA). A chlorophyll a-binding site is contributed by His-118. Residue Tyr-126 coordinates pheophytin a. [CaMn4O5] cluster-binding residues include Asp-170 and Glu-189. Residues 197 to 218 (FHMLGVAGVFGGSLFSAMHGSL) form a helical membrane-spanning segment. His-198 contributes to the chlorophyll a binding site. Residues His-215 and 264-265 (SF) contribute to the a quinone site. Position 215 (His-215) interacts with Fe cation. His-272 lines the Fe cation pocket. The chain crosses the membrane as a helical span at residues 274 to 288 (FLAAWPVVGIWFTAL). His-332, Glu-333, Asp-342, and Ala-344 together coordinate [CaMn4O5] cluster. A propeptide spanning residues 345–353 (SVEAPSTNG) is cleaved from the precursor.

It belongs to the reaction center PufL/M/PsbA/D family. PSII is composed of 1 copy each of membrane proteins PsbA, PsbB, PsbC, PsbD, PsbE, PsbF, PsbH, PsbI, PsbJ, PsbK, PsbL, PsbM, PsbT, PsbX, PsbY, PsbZ, Psb30/Ycf12, at least 3 peripheral proteins of the oxygen-evolving complex and a large number of cofactors. It forms dimeric complexes. Requires The D1/D2 heterodimer binds P680, chlorophylls that are the primary electron donor of PSII, and subsequent electron acceptors. It shares a non-heme iron and each subunit binds pheophytin, quinone, additional chlorophylls, carotenoids and lipids. D1 provides most of the ligands for the Mn4-Ca-O5 cluster of the oxygen-evolving complex (OEC). There is also a Cl(-1) ion associated with D1 and D2, which is required for oxygen evolution. The PSII complex binds additional chlorophylls, carotenoids and specific lipids. as cofactor. Tyr-161 forms a radical intermediate that is referred to as redox-active TyrZ, YZ or Y-Z. In terms of processing, C-terminally processed by CTPA; processing is essential to allow assembly of the oxygen-evolving complex and thus photosynthetic growth.

Its subcellular location is the plastid. The protein resides in the chloroplast thylakoid membrane. The enzyme catalyses 2 a plastoquinone + 4 hnu + 2 H2O = 2 a plastoquinol + O2. Its function is as follows. Photosystem II (PSII) is a light-driven water:plastoquinone oxidoreductase that uses light energy to abstract electrons from H(2)O, generating O(2) and a proton gradient subsequently used for ATP formation. It consists of a core antenna complex that captures photons, and an electron transfer chain that converts photonic excitation into a charge separation. The D1/D2 (PsbA/PsbD) reaction center heterodimer binds P680, the primary electron donor of PSII as well as several subsequent electron acceptors. In Acorus calamus (Sweet flag), this protein is Photosystem II protein D1.